A 415-amino-acid polypeptide reads, in one-letter code: Dynein assembly factor with WD repeat domains 1 (415 aa).

WD repeat units follow at residues 90 to 129 (AHIL…ELHT), 132 to 174 (GHRN…HTFR), 175 to 214 (GHTA…EALT), 217 to 256 (GHAA…RIHT), 259 to 298 (GHRG…CVAT), 301 to 340 (GHDD…CLAK), 343 to 384 (GHEG…QVLK), and 386 to 415 (HTDE…RIWR).

It belongs to the WD repeat WDR69 family.

It is found in the cytoplasm. The protein resides in the cytoskeleton. The protein localises to the flagellum basal body. Its subcellular location is the flagellum axoneme. Required for axonemal dynein assembly and ciliary motility in ciliated organs, including Kupffer's vesicle, during embryogenesis. Facilitates the onset of robust cilia motility during development. This Xenopus laevis (African clawed frog) protein is Dynein assembly factor with WD repeat domains 1 (daw1).